Consider the following 85-residue polypeptide: uncharacterized protein (85 aa).

Belongs to the ycf76 family.

Its subcellular location is the plastid. It is found in the chloroplast. This is an uncharacterized protein from Zea mays (Maize).